The primary structure comprises 297 residues: Bifunctional protein FolD 1 (297 aa).

NADP(+) contacts are provided by residues 164–166 (GRS) and Thr-230.

This sequence belongs to the tetrahydrofolate dehydrogenase/cyclohydrolase family. As to quaternary structure, homodimer.

The enzyme catalyses (6R)-5,10-methylene-5,6,7,8-tetrahydrofolate + NADP(+) = (6R)-5,10-methenyltetrahydrofolate + NADPH. The catalysed reaction is (6R)-5,10-methenyltetrahydrofolate + H2O = (6R)-10-formyltetrahydrofolate + H(+). It functions in the pathway one-carbon metabolism; tetrahydrofolate interconversion. In terms of biological role, catalyzes the oxidation of 5,10-methylenetetrahydrofolate to 5,10-methenyltetrahydrofolate and then the hydrolysis of 5,10-methenyltetrahydrofolate to 10-formyltetrahydrofolate. The protein is Bifunctional protein FolD 1 of Rhodococcus jostii (strain RHA1).